A 480-amino-acid chain; its full sequence is Chromosomal replication initiator protein DnaA (480 aa).

The segment at 1 to 73 is domain I, interacts with DnaA modulators; that stretch reads MNQDFWPFCL…GELGEEFHGQ (73 aa). A domain II region spans residues 73–143; sequence QPIQLELQLP…SANELAYDKT (71 aa). The tract at residues 144–360 is domain III, AAA+ region; sequence RLNADFTFDT…GALNKVVAYA (217 aa). ATP is bound by residues glycine 188, glycine 190, lysine 191, and threonine 192. The domain IV, binds dsDNA stretch occupies residues 361–480; sequence RFHGRGISLE…VHVLTQVLRG (120 aa).

The protein belongs to the DnaA family. Oligomerizes as a right-handed, spiral filament on DNA at oriC.

Its subcellular location is the cytoplasm. In terms of biological role, plays an essential role in the initiation and regulation of chromosomal replication. ATP-DnaA binds to the origin of replication (oriC) to initiate formation of the DNA replication initiation complex once per cell cycle. Binds the DnaA box (a 9 base pair repeat at the origin) and separates the double-stranded (ds)DNA. Forms a right-handed helical filament on oriC DNA; dsDNA binds to the exterior of the filament while single-stranded (ss)DNA is stabiized in the filament's interior. The ATP-DnaA-oriC complex binds and stabilizes one strand of the AT-rich DNA unwinding element (DUE), permitting loading of DNA polymerase. After initiation quickly degrades to an ADP-DnaA complex that is not apt for DNA replication. Binds acidic phospholipids. This is Chromosomal replication initiator protein DnaA from Azoarcus sp. (strain BH72).